The chain runs to 132 residues: Ribosome-binding factor A (132 aa).

It belongs to the RbfA family. Monomer. Binds 30S ribosomal subunits, but not 50S ribosomal subunits or 70S ribosomes.

Its subcellular location is the cytoplasm. In terms of biological role, one of several proteins that assist in the late maturation steps of the functional core of the 30S ribosomal subunit. Associates with free 30S ribosomal subunits (but not with 30S subunits that are part of 70S ribosomes or polysomes). Required for efficient processing of 16S rRNA. May interact with the 5'-terminal helix region of 16S rRNA. The chain is Ribosome-binding factor A from Pseudomonas putida (strain ATCC 700007 / DSM 6899 / JCM 31910 / BCRC 17059 / LMG 24140 / F1).